The chain runs to 109 residues: Large ribosomal subunit protein uL24 (109 aa).

This sequence belongs to the universal ribosomal protein uL24 family. As to quaternary structure, part of the 50S ribosomal subunit.

Functionally, one of two assembly initiator proteins, it binds directly to the 5'-end of the 23S rRNA, where it nucleates assembly of the 50S subunit. Its function is as follows. One of the proteins that surrounds the polypeptide exit tunnel on the outside of the subunit. The sequence is that of Large ribosomal subunit protein uL24 from Rickettsia africae (strain ESF-5).